The following is a 445-amino-acid chain: 3-phosphoshikimate 1-carboxyvinyltransferase (445 aa).

Lys21, Ser22, and Arg26 together coordinate 3-phosphoshikimate. Position 21 (Lys21) interacts with phosphoenolpyruvate. Residues Gly92 and Arg120 each coordinate phosphoenolpyruvate. 3-phosphoshikimate contacts are provided by Ser165, Gln166, Asp307, and Lys334. Gln166 is a phosphoenolpyruvate binding site. The Proton acceptor role is filled by Asp307. Arg338, Arg379, and Lys405 together coordinate phosphoenolpyruvate.

Belongs to the EPSP synthase family. In terms of assembly, monomer.

Its subcellular location is the cytoplasm. It carries out the reaction 3-phosphoshikimate + phosphoenolpyruvate = 5-O-(1-carboxyvinyl)-3-phosphoshikimate + phosphate. It functions in the pathway metabolic intermediate biosynthesis; chorismate biosynthesis; chorismate from D-erythrose 4-phosphate and phosphoenolpyruvate: step 6/7. Catalyzes the transfer of the enolpyruvyl moiety of phosphoenolpyruvate (PEP) to the 5-hydroxyl of shikimate-3-phosphate (S3P) to produce enolpyruvyl shikimate-3-phosphate and inorganic phosphate. This chain is 3-phosphoshikimate 1-carboxyvinyltransferase, found in Chlamydia felis (strain Fe/C-56) (Chlamydophila felis).